The sequence spans 212 residues: Large ribosomal subunit protein uL3 (212 aa).

Position 153 is an N5-methylglutamine (glutamine 153).

The protein belongs to the universal ribosomal protein uL3 family. As to quaternary structure, part of the 50S ribosomal subunit. Forms a cluster with proteins L14 and L19. In terms of processing, methylated by PrmB.

Its function is as follows. One of the primary rRNA binding proteins, it binds directly near the 3'-end of the 23S rRNA, where it nucleates assembly of the 50S subunit. This is Large ribosomal subunit protein uL3 from Colwellia psychrerythraea (strain 34H / ATCC BAA-681) (Vibrio psychroerythus).